The sequence spans 163 residues: SsrA-binding protein (163 aa).

Belongs to the SmpB family.

Its subcellular location is the cytoplasm. Functionally, required for rescue of stalled ribosomes mediated by trans-translation. Binds to transfer-messenger RNA (tmRNA), required for stable association of tmRNA with ribosomes. tmRNA and SmpB together mimic tRNA shape, replacing the anticodon stem-loop with SmpB. tmRNA is encoded by the ssrA gene; the 2 termini fold to resemble tRNA(Ala) and it encodes a 'tag peptide', a short internal open reading frame. During trans-translation Ala-aminoacylated tmRNA acts like a tRNA, entering the A-site of stalled ribosomes, displacing the stalled mRNA. The ribosome then switches to translate the ORF on the tmRNA; the nascent peptide is terminated with the 'tag peptide' encoded by the tmRNA and targeted for degradation. The ribosome is freed to recommence translation, which seems to be the essential function of trans-translation. This chain is SsrA-binding protein, found in Shewanella sp. (strain ANA-3).